Here is a 503-residue protein sequence, read N- to C-terminus: Beta-mannosyltransferase 4 (503 aa).

Residues 1–24 are Cytoplasmic-facing; that stretch reads MKLDTQQISHLLSRQMYHLAPRKK. Residues 25-45 traverse the membrane as a helical segment; that stretch reads LLIWGGSLGFVLLLLIVASSH. Residues 46-503 are Extracellular-facing; that stretch reads QRIRSTILHR…QYCQRYGELH (458 aa). Residue asparagine 468 is glycosylated (N-linked (GlcNAc...) asparagine).

This sequence belongs to the BMT family.

Its subcellular location is the membrane. Beta-mannosyltransferase involved in cell wall biosynthesis. Responsible for addition of a hexose to the beta-mannose chain. The protein is Beta-mannosyltransferase 4 (BMT4) of Komagataella phaffii (strain ATCC 76273 / CBS 7435 / CECT 11047 / NRRL Y-11430 / Wegner 21-1) (Yeast).